The primary structure comprises 324 residues: Type II restriction enzyme AplI (324 aa).

Belongs to the BsuBI/PstI type II restriction endonuclease family. Requires Mg(2+) as cofactor.

The catalysed reaction is Endonucleolytic cleavage of DNA to give specific double-stranded fragments with terminal 5'-phosphates.. Activated by K(+) and Na(+) ions, whereas NH(4)(+) ions appear to inhibit endonuclease activity. Its function is as follows. A P subtype restriction enzyme that recognizes the double-stranded sequence 5'-CTGCAG-3' and cleaves after A-5. This is Type II restriction enzyme AplI (aplIR) from Arthrospira platensis (strain NIES-39 / UTEX 3086 / IAM M-135) (Spirulina platensis).